The primary structure comprises 168 residues: Protein yop-1 (168 aa).

The Cytoplasmic portion of the chain corresponds to 1–35 (MSSPQDRAQQYIGQLDKELSKYPTLNNLEKTTGVP). The helical transmembrane segment at 36–55 (KAYAVIGLVALYFFLIIFNL) threads the bilayer. Position 56 (G56) is a topological domain, lumenal. A helical transmembrane segment spans residues 57–76 (GQLLTNLAGFVLPGYYSLNA). Residues 77–86 (LFTASKQDDT) lie on the Cytoplasmic side of the membrane. The helical transmembrane segment at 87 to 103 (QWLTYWVVFSLFTVIES) threads the bilayer. Over 104 to 105 (LI) the chain is Lumenal. Residues 106–124 (SVVYWFPFYFTFKFVFLLW) form a helical membrane-spanning segment. At 125–168 (LSLPTFKGAETIFRSFLAPTLGRYFQNGSTASGLRAKADAVHTD) the chain is on the cytoplasmic side.

This sequence belongs to the DP1 family. As to quaternary structure, oligomer.

The protein localises to the endoplasmic reticulum membrane. The protein resides in the golgi apparatus membrane. In terms of biological role, required to generate and maintain the structure of the tubular endoplasmic reticulum network and the vacuole. Induces high curvature in membranes and causes membrane tubule formation. Involved in membrane/vesicle trafficking. The protein is Protein yop-1 (yop-1) of Neurospora crassa (strain ATCC 24698 / 74-OR23-1A / CBS 708.71 / DSM 1257 / FGSC 987).